Consider the following 371-residue polypeptide: Probable dual-specificity RNA methyltransferase RlmN (371 aa).

Glutamate 114 serves as the catalytic Proton acceptor. Residues 120–346 form the Radical SAM core domain; the sequence is DGPRRSICVS…ESAGVNVNFR (227 aa). A disulfide bridge connects residues cysteine 127 and cysteine 357. Cysteine 134, cysteine 138, and cysteine 141 together coordinate [4Fe-4S] cluster. S-adenosyl-L-methionine-binding positions include 183-184, serine 215, 238-240, and asparagine 314; these read GE and SLH. Cysteine 357 serves as the catalytic S-methylcysteine intermediate.

The protein belongs to the radical SAM superfamily. RlmN family. Requires [4Fe-4S] cluster as cofactor.

Its subcellular location is the cytoplasm. The enzyme catalyses adenosine(2503) in 23S rRNA + 2 reduced [2Fe-2S]-[ferredoxin] + 2 S-adenosyl-L-methionine = 2-methyladenosine(2503) in 23S rRNA + 5'-deoxyadenosine + L-methionine + 2 oxidized [2Fe-2S]-[ferredoxin] + S-adenosyl-L-homocysteine. It catalyses the reaction adenosine(37) in tRNA + 2 reduced [2Fe-2S]-[ferredoxin] + 2 S-adenosyl-L-methionine = 2-methyladenosine(37) in tRNA + 5'-deoxyadenosine + L-methionine + 2 oxidized [2Fe-2S]-[ferredoxin] + S-adenosyl-L-homocysteine. Specifically methylates position 2 of adenine 2503 in 23S rRNA and position 2 of adenine 37 in tRNAs. The protein is Probable dual-specificity RNA methyltransferase RlmN of Rhodopirellula baltica (strain DSM 10527 / NCIMB 13988 / SH1).